We begin with the raw amino-acid sequence, 292 residues long: Sulfofructosephosphate aldolase (292 aa).

The Schiff-base intermediate with substrate role is filled by K193.

It belongs to the aldolase LacD family. In terms of assembly, homotetramer.

The catalysed reaction is 6-deoxy-6-sulfo-D-fructose 1-phosphate = (2S)-3-sulfolactaldehyde + dihydroxyacetone phosphate. Functionally, cleaves 6-deoxy-6-sulfo-D-fructose 1-phosphate (SFP) to form dihydroxyacetone phosphate (DHAP) and 3-sulfolactaldehyde (SLA). In Escherichia coli O157:H7, this protein is Sulfofructosephosphate aldolase (yihT).